The following is a 95-amino-acid chain: Aspartyl/glutamyl-tRNA(Asn/Gln) amidotransferase subunit C (95 aa).

Belongs to the GatC family. In terms of assembly, heterotrimer of A, B and C subunits.

The enzyme catalyses L-glutamyl-tRNA(Gln) + L-glutamine + ATP + H2O = L-glutaminyl-tRNA(Gln) + L-glutamate + ADP + phosphate + H(+). The catalysed reaction is L-aspartyl-tRNA(Asn) + L-glutamine + ATP + H2O = L-asparaginyl-tRNA(Asn) + L-glutamate + ADP + phosphate + 2 H(+). Allows the formation of correctly charged Asn-tRNA(Asn) or Gln-tRNA(Gln) through the transamidation of misacylated Asp-tRNA(Asn) or Glu-tRNA(Gln) in organisms which lack either or both of asparaginyl-tRNA or glutaminyl-tRNA synthetases. The reaction takes place in the presence of glutamine and ATP through an activated phospho-Asp-tRNA(Asn) or phospho-Glu-tRNA(Gln). This Chlorobium phaeovibrioides (strain DSM 265 / 1930) (Prosthecochloris vibrioformis (strain DSM 265)) protein is Aspartyl/glutamyl-tRNA(Asn/Gln) amidotransferase subunit C.